Reading from the N-terminus, the 347-residue chain is Protein phosphatase 2C homolog 1 (347 aa).

The tract at residues 1–41 is disordered; it reads MKGSHPNAGSLLEPLHKLNPFSENSTSGHRKNASDHSADGE. Residues 32-41 show a composition bias toward basic and acidic residues; sequence NASDHSADGE. In terms of domain architecture, PPM-type phosphatase spans 71-323; that stretch reads LAGLMEDKNQ…DNITCIVVNL (253 aa). 4 residues coordinate Mn(2+): Asp109, Gly110, Asp275, and Asp314.

Belongs to the PP2C family. In terms of assembly, monomer. Mg(2+) serves as cofactor. Mn(2+) is required as a cofactor.

The catalysed reaction is O-phospho-L-seryl-[protein] + H2O = L-seryl-[protein] + phosphate. It carries out the reaction O-phospho-L-threonyl-[protein] + H2O = L-threonyl-[protein] + phosphate. Functionally, serine and threonine phosphatase. Has a specialized role in the heat shock response. May be responsible for the dephosphorylation of hsp90. This Schizosaccharomyces pombe (strain 972 / ATCC 24843) (Fission yeast) protein is Protein phosphatase 2C homolog 1 (ptc1).